The chain runs to 767 residues: E3 ubiquitin-protein ligase pub1 (767 aa).

The C2 domain occupies Met-1 to Arg-111. A compositionally biased stretch (polar residues) spans Leu-138–Asp-158. Disordered stretches follow at residues Leu-138–Asp-216 and Ser-252–Phe-306. A Phosphothreonine modification is found at Thr-156. Residues Pro-159–Ala-176 are compositionally biased toward low complexity. Position 178 is a phosphoserine (Ser-178). Position 180 is a phosphothreonine (Thr-180). Positions Ala-184 to Pro-194 are enriched in low complexity. Residues Trp-211 to Pro-236 enclose the WW 1 domain. The span at Asn-257–Gly-286 shows a compositional bias: polar residues. 2 WW domains span residues Trp-294–Pro-319 and Trp-351–Pro-376. An HECT domain is found at Phe-463–Glu-767. The active-site Glycyl thioester intermediate is Cys-735.

The protein resides in the membrane. Its subcellular location is the cytoplasm. The enzyme catalyses S-ubiquitinyl-[E2 ubiquitin-conjugating enzyme]-L-cysteine + [acceptor protein]-L-lysine = [E2 ubiquitin-conjugating enzyme]-L-cysteine + N(6)-ubiquitinyl-[acceptor protein]-L-lysine.. It participates in protein modification; protein ubiquitination. Functionally, E3 ubiquitin-protein ligase which accepts ubiquitin from an E2 ubiquitin-conjugating enzyme in the form of a thioester and then directly transfers the ubiquitin to targeted substrates. Regulates ubiquitination of cdc25. The sequence is that of E3 ubiquitin-protein ligase pub1 (pub1) from Schizosaccharomyces pombe (strain 972 / ATCC 24843) (Fission yeast).